The primary structure comprises 191 residues: tRNA-specific adenosine deaminase 2 (191 aa).

One can recognise a CMP/dCMP-type deaminase domain in the interval 20 to 145 (EETEKWMEQA…SVLDIASADL (126 aa)). His-71 serves as a coordination point for Zn(2+). Catalysis depends on Glu-73, which acts as the Proton donor. Positions 107 and 110 each coordinate Zn(2+).

The protein belongs to the cytidine and deoxycytidylate deaminase family. ADAT2 subfamily. The cofactor is Zn(2+).

The catalysed reaction is adenosine(34) in tRNA + H2O + H(+) = inosine(34) in tRNA + NH4(+). Its function is as follows. Probably participates in deamination of adenosine-34 to inosine in many tRNAs. The sequence is that of tRNA-specific adenosine deaminase 2 (DEADC1) from Bos taurus (Bovine).